We begin with the raw amino-acid sequence, 344 residues long: 17-beta-hydroxysteroid dehydrogenase type 1 (344 aa).

3–32 (PTVVLITGCSSGIGMHLAVRLASDRSQSFK) lines the NAD(+) pocket. NADP(+) contacts are provided by residues 10 to 38 (GCSS…ATLR) and Asp-66. Position 135 is a phosphoserine (Ser-135). Ser-143 serves as a coordination point for substrate. Tyr-156 serves as the catalytic Proton acceptor. NADP(+) is bound at residue Lys-160.

The protein belongs to the short-chain dehydrogenases/reductases (SDR) family. In terms of assembly, homodimer. Exists predominantly as a homodimer but also exits as monomer.

Its subcellular location is the cytoplasm. The enzyme catalyses 17beta-estradiol + NAD(+) = estrone + NADH + H(+). The catalysed reaction is 17beta-estradiol + NADP(+) = estrone + NADPH + H(+). It catalyses the reaction testosterone + NADP(+) = androst-4-ene-3,17-dione + NADPH + H(+). Its pathway is steroid biosynthesis; estrogen biosynthesis. Favors the reduction of estrogens and androgens. Converts estrone (E1) to a more potent estrogen, 17beta-estradiol (E2). Also has 20-alpha-HSD activity. Uses preferentially NADH. This chain is 17-beta-hydroxysteroid dehydrogenase type 1, found in Mus musculus (Mouse).